Consider the following 71-residue polypeptide: uncharacterized protein (71 aa).

Residues Tyr12–Ile34 traverse the membrane as a helical segment.

It localises to the membrane. This is an uncharacterized protein from Schizosaccharomyces pombe (strain 972 / ATCC 24843) (Fission yeast).